Consider the following 101-residue polypeptide: Protein S100-A7-like 2 (101 aa).

2 consecutive EF-hand domains span residues 13 to 48 (IVAM…SGCE) and 50 to 85 (SDMD…ITID). D63, N65, D67, K69, and E74 together coordinate Ca(2+). Zn(2+) contacts are provided by H87 and H91.

This sequence belongs to the S-100 family.

This Homo sapiens (Human) protein is Protein S100-A7-like 2 (S100A7L2).